The chain runs to 367 residues: Glutamate 5-kinase (367 aa).

An ATP-binding site is contributed by lysine 10. Substrate contacts are provided by serine 50, aspartate 137, and asparagine 149. ATP is bound at residue 169-170 (TD). The PUA domain maps to 275 to 353 (AGEITVDEGA…QQIDAILGYE (79 aa)).

This sequence belongs to the glutamate 5-kinase family.

It is found in the cytoplasm. It carries out the reaction L-glutamate + ATP = L-glutamyl 5-phosphate + ADP. It participates in amino-acid biosynthesis; L-proline biosynthesis; L-glutamate 5-semialdehyde from L-glutamate: step 1/2. Functionally, catalyzes the transfer of a phosphate group to glutamate to form L-glutamate 5-phosphate. The chain is Glutamate 5-kinase from Salmonella paratyphi B (strain ATCC BAA-1250 / SPB7).